The primary structure comprises 102 residues: uncharacterized protein (102 aa).

Residues 1–41 (MAAPRQIAFYGKGGTGKPKRKPEPVTASKEDRCLGSPSKNK) form a disordered region.

The protein to the N-terminal of nitrogenase iron protein (NifH). Has lost the ATP-binding site.

Functionally, this protein is either not expressed, expressed at low levels or rapidly degraded. This is an uncharacterized protein from Rhizobium meliloti (Ensifer meliloti).